Here is a 146-residue protein sequence, read N- to C-terminus: Hemoglobin subunit beta (146 aa).

Valine 1 is modified (N-acetylvaline). The Globin domain occupies 2–146; that stretch reads QLSGEEKAAV…VANALAHKYH (145 aa). Serine 44 is modified (phosphoserine). An N6-acetyllysine modification is found at lysine 59. Histidine 63 contributes to the heme b binding site. Lysine 82 is subject to N6-acetyllysine. Histidine 92 serves as a coordination point for heme b. At cysteine 93 the chain carries S-nitrosocysteine. Lysine 144 carries the post-translational modification N6-acetyllysine.

This sequence belongs to the globin family. In terms of assembly, heterotetramer of two alpha chains and two beta chains. As to expression, red blood cells.

Involved in oxygen transport from the lung to the various peripheral tissues. This Equus hemionus kulan (Turkmenian kulan) protein is Hemoglobin subunit beta (HBB).